The chain runs to 955 residues: Structure-specific endonuclease subunit SLX4 (955 aa).

Disordered regions lie at residues 75–173 (QAEQ…RTTS), 189–231 (PVTT…TVSR), 352–376 (GPSNDSKIPNQASPVKSKAPKKKPR), 539–608 (EMQK…PTKI), 621–648 (PIVASDVDSDNEPPPSNQQAYQMPPPPR), 705–784 (AAGQ…ASPD), and 819–846 (LDSDGEAGLSPSPSLSPEPVFSSPEKDS). A compositionally biased stretch (basic residues) spans 123–137 (RKARKTANGVTKKKR). Residues 150 to 159 (NEITTPTKNQ) show a composition bias toward polar residues. Low complexity predominate over residues 189-198 (PVTTSTTDLT). Residues 209–225 (TKSRVRKTSSAASRKKK) show a composition bias toward basic residues. Residues 352–362 (GPSNDSKIPNQ) are compositionally biased toward polar residues. Positions 539–551 (EMQKSPSRSEPKG) are enriched in basic and acidic residues. A compositionally biased stretch (polar residues) spans 579–601 (SANSAEHTLKTQASKSTHFASTT). 2 stretches are compositionally biased toward low complexity: residues 705–720 (AAGQSSAFATTSRTSA) and 727–737 (KTSTAAAAAKS). Composition is skewed to basic residues over residues 738–748 (PTKRPVGRPRK) and 767–776 (KRPRGRPKKN). The segment covering 828 to 841 (SPSPSLSPEPVFSS) has biased composition (low complexity).

Belongs to the SLX4 family. Forms a heterodimer with SLX1. Post-translationally, phosphorylated in response to DNA damage.

It is found in the nucleus. Functionally, regulatory subunit of the SLX1-SLX4 structure-specific endonuclease that resolves DNA secondary structures generated during DNA repair and recombination. Has endonuclease activity towards branched DNA substrates, introducing single-strand cuts in duplex DNA close to junctions with ss-DNA. This is Structure-specific endonuclease subunit SLX4 from Pyricularia oryzae (strain 70-15 / ATCC MYA-4617 / FGSC 8958) (Rice blast fungus).